Reading from the N-terminus, the 156-residue chain is 2-C-methyl-D-erythritol 2,4-cyclodiphosphate synthase (156 aa).

A divalent metal cation is bound by residues Asp-9 and His-11. Residues 9-11 (DAH) and 36-37 (HS) each bind 4-CDP-2-C-methyl-D-erythritol 2-phosphate. An a divalent metal cation-binding site is contributed by His-44. 4-CDP-2-C-methyl-D-erythritol 2-phosphate is bound at residue 58 to 60 (NIG).

This sequence belongs to the IspF family. As to quaternary structure, homotrimer. A divalent metal cation is required as a cofactor.

The enzyme catalyses 4-CDP-2-C-methyl-D-erythritol 2-phosphate = 2-C-methyl-D-erythritol 2,4-cyclic diphosphate + CMP. The protein operates within isoprenoid biosynthesis; isopentenyl diphosphate biosynthesis via DXP pathway; isopentenyl diphosphate from 1-deoxy-D-xylulose 5-phosphate: step 4/6. Involved in the biosynthesis of isopentenyl diphosphate (IPP) and dimethylallyl diphosphate (DMAPP), two major building blocks of isoprenoid compounds. Catalyzes the conversion of 4-diphosphocytidyl-2-C-methyl-D-erythritol 2-phosphate (CDP-ME2P) to 2-C-methyl-D-erythritol 2,4-cyclodiphosphate (ME-CPP) with a corresponding release of cytidine 5-monophosphate (CMP). The protein is 2-C-methyl-D-erythritol 2,4-cyclodiphosphate synthase of Kosmotoga olearia (strain ATCC BAA-1733 / DSM 21960 / TBF 19.5.1).